Reading from the N-terminus, the 324-residue chain is Beta-ketoacyl-[acyl-carrier-protein] synthase III (324 aa).

Residues Cys112 and His249 contribute to the active site. Residues 250–254 (QANRR) are ACP-binding. Asn279 is a catalytic residue.

This sequence belongs to the thiolase-like superfamily. FabH family. As to quaternary structure, homodimer.

The protein resides in the cytoplasm. It carries out the reaction malonyl-[ACP] + acetyl-CoA + H(+) = 3-oxobutanoyl-[ACP] + CO2 + CoA. Its pathway is lipid metabolism; fatty acid biosynthesis. Its function is as follows. Catalyzes the condensation reaction of fatty acid synthesis by the addition to an acyl acceptor of two carbons from malonyl-ACP. Catalyzes the first condensation reaction which initiates fatty acid synthesis and may therefore play a role in governing the total rate of fatty acid production. Possesses both acetoacetyl-ACP synthase and acetyl transacylase activities. Its substrate specificity determines the biosynthesis of branched-chain and/or straight-chain of fatty acids. This chain is Beta-ketoacyl-[acyl-carrier-protein] synthase III, found in Streptococcus pyogenes serotype M2 (strain MGAS10270).